A 78-amino-acid polypeptide reads, in one-letter code: Small ribosomal subunit protein bS16c (78 aa).

The protein belongs to the bacterial ribosomal protein bS16 family.

The protein resides in the plastid. It localises to the chloroplast. This is Small ribosomal subunit protein bS16c from Amborella trichopoda.